The following is a 340-amino-acid chain: tRNA N6-adenosine threonylcarbamoyltransferase (340 aa).

Fe cation contacts are provided by His111 and His115. Substrate is bound by residues Leu134–Gly138, Asp167, Gly180, and Asn276. Asp304 is a Fe cation binding site.

Belongs to the KAE1 / TsaD family. Fe(2+) is required as a cofactor.

The protein resides in the cytoplasm. The catalysed reaction is L-threonylcarbamoyladenylate + adenosine(37) in tRNA = N(6)-L-threonylcarbamoyladenosine(37) in tRNA + AMP + H(+). In terms of biological role, required for the formation of a threonylcarbamoyl group on adenosine at position 37 (t(6)A37) in tRNAs that read codons beginning with adenine. Is involved in the transfer of the threonylcarbamoyl moiety of threonylcarbamoyl-AMP (TC-AMP) to the N6 group of A37, together with TsaE and TsaB. TsaD likely plays a direct catalytic role in this reaction. The chain is tRNA N6-adenosine threonylcarbamoyltransferase from Helicobacter pylori (strain G27).